Here is a 419-residue protein sequence, read N- to C-terminus: UDP-N-acetylglucosamine 1-carboxyvinyltransferase (419 aa).

Phosphoenolpyruvate is bound at residue 22–23 (KN). A UDP-N-acetyl-alpha-D-glucosamine-binding site is contributed by Arg-95. Catalysis depends on Cys-119, which acts as the Proton donor. Cys-119 carries the post-translational modification 2-(S-cysteinyl)pyruvic acid O-phosphothioketal. UDP-N-acetyl-alpha-D-glucosamine contacts are provided by residues 164 to 167 (KVSV), Asp-308, and Ile-330.

Belongs to the EPSP synthase family. MurA subfamily.

Its subcellular location is the cytoplasm. It catalyses the reaction phosphoenolpyruvate + UDP-N-acetyl-alpha-D-glucosamine = UDP-N-acetyl-3-O-(1-carboxyvinyl)-alpha-D-glucosamine + phosphate. It functions in the pathway cell wall biogenesis; peptidoglycan biosynthesis. Functionally, cell wall formation. Adds enolpyruvyl to UDP-N-acetylglucosamine. The polypeptide is UDP-N-acetylglucosamine 1-carboxyvinyltransferase (Rickettsia akari (strain Hartford)).